We begin with the raw amino-acid sequence, 1055 residues long: SMC5-SMC6 complex localization factor protein 1 (1055 aa).

2 BRCT domains span residues 2 to 80 (EDDA…AQSG) and 121 to 199 (PGAF…LLEK). The tract at residues 312-332 (KKRKKEKERDSRKDIEHDRST) is disordered. Basic and acidic residues predominate over residues 318–332 (KERDSRKDIEHDRST). An NSE5-like domain; mediates interaction with SLF2 region spans residues 407–1055 (PRGILNLIES…VMCRSVTEIS (649 aa)). ANK repeat units follow at residues 804–834 (KGET…DINV), 838–867 (AGWT…EVDL), and 872–901 (DGVT…PVLL). Lysine 929 is covalently cross-linked (Glycyl lysine isopeptide (Lys-Gly) (interchain with G-Cter in SUMO2)).

As to quaternary structure, interacts (via N-terminus) with SLF2; this interaction links RAD18 to the SMC5-SMC6 complex. Interacts (via BRCT domains) with RAD18; this interaction occurs in a SLF2-independent manner. Interacts with SMC6. Interacts (via BRCT domains) with RAD18 (via C-terminus and phosphorylated form); this interaction is required for efficient repair of UV-induced DNA damage.

Its subcellular location is the nucleus. It localises to the cytoplasm. It is found in the cytoskeleton. The protein localises to the microtubule organizing center. The protein resides in the centrosome. In terms of biological role, plays a role in the DNA damage response (DDR) pathway by regulating postreplication repair of UV-damaged DNA and genomic stability maintenance. The SLF1-SLF2 complex acts to link RAD18 with the SMC5-SMC6 complex at replication-coupled interstrand cross-links (ICL) and DNA double-strand breaks (DSBs) sites on chromatin during DNA repair in response to stalled replication forks. Promotes the recruitment of SLF2 and the SMC5-SMC6 complex to DNA lesions. The polypeptide is SMC5-SMC6 complex localization factor protein 1 (Bos taurus (Bovine)).